Here is a 388-residue protein sequence, read N- to C-terminus: Spermosin (388 aa).

A signal peptide spans 1 to 22; that stretch reads MAAINVIFISGAIALFALTGSC. Polar residues predominate over residues 29 to 49; sequence FTNKPYATQNPYSPPQTNQPT. Positions 29-98 are disordered; that stretch reads FTNKPYATQN…SENSESENSE (70 aa). Over residues 54-64 the composition is skewed to pro residues; that stretch reads QPGPAPTPAPY. Cystine bridges form between Cys-116/Cys-251, Cys-163/Cys-179, Cys-265/Cys-330, Cys-295/Cys-310, and Cys-320/Cys-349. In terms of domain architecture, Peptidase S1 spans 130–372; that stretch reads IVGGAEAVPN…NLEWLCCYMP (243 aa). Active-site charge relay system residues include His-178 and Asp-231. Ser-324 serves as the catalytic Charge relay system.

Belongs to the peptidase S1 family. As to quaternary structure, heterodimer of a heavy chain and either an L1 light chain or an L2 light chain linked by a disulfide bond. As to expression, detected in sperm, but not in unfertilized eggs (at protein level). Expressed in gonad, but not in hepatopancreas, intestine or branchial basket.

The protein resides in the secreted. It carries out the reaction Hydrolyzes arginyl bonds, preferably with Pro in the P2 position.. Inhibited by peptidyl-argininals with Pro in the P2 position, diisopropyl fluorophosphate, phenylmethanesulfonyl fluoride, leupeptin, antipain, soybean trypsin inhibitor, aprotinin, ovomucoid, valyl-prolyl-arginyl-chloromethane, glycyl-valyl-arginyl-chloromethane, p-aminobenzamidine, benzamidine, zinc chloride and mercuric chloride. Its function is as follows. Trypsin-like protease with a narrow substrate specificity. Preferentially hydrolyzes substrates with Pro in the P2 position and Val in the P3 position. Plays a role in fertilization. This is Spermosin from Halocynthia roretzi (Sea squirt).